Consider the following 112-residue polypeptide: Protein lin-52 homolog (112 aa).

Belongs to the lin-52 family. In terms of assembly, component of the DREAM complex.

This chain is Protein lin-52 homolog (lin52), found in Danio rerio (Zebrafish).